A 95-amino-acid polypeptide reads, in one-letter code: Co-chaperonin GroES (95 aa).

This sequence belongs to the GroES chaperonin family. In terms of assembly, heptamer of 7 subunits arranged in a ring. Interacts with the chaperonin GroEL.

The protein resides in the cytoplasm. Functionally, together with the chaperonin GroEL, plays an essential role in assisting protein folding. The GroEL-GroES system forms a nano-cage that allows encapsulation of the non-native substrate proteins and provides a physical environment optimized to promote and accelerate protein folding. GroES binds to the apical surface of the GroEL ring, thereby capping the opening of the GroEL channel. This Streptococcus thermophilus (strain ATCC BAA-491 / LMD-9) protein is Co-chaperonin GroES.